Reading from the N-terminus, the 438-residue chain is GTPase Der (438 aa).

2 EngA-type G domains span residues 3 to 168 (PLIA…PCPE) and 179 to 354 (IKLA…INRR). GTP contacts are provided by residues 9–16 (GRPNVGKS), 56–60 (DTGGY), 120–123 (NKVD), 185–192 (GRPNVGKS), 232–236 (DTAGL), and 297–300 (NKWD). A KH-like domain is found at 355–438 (QKISTSNLNR…LPITMRFLRK (84 aa)).

It belongs to the TRAFAC class TrmE-Era-EngA-EngB-Septin-like GTPase superfamily. EngA (Der) GTPase family. As to quaternary structure, associates with the 50S ribosomal subunit.

Functionally, GTPase that plays an essential role in the late steps of ribosome biogenesis. This chain is GTPase Der, found in Chlorobaculum parvum (strain DSM 263 / NCIMB 8327) (Chlorobium vibrioforme subsp. thiosulfatophilum).